The sequence spans 413 residues: MTNQTVRGTKDLLFDEWYRFKYIQQIANRISSLYGFLPAQTPIFEYTEVFMKTLGDGSDIINKEMYTFYDKGGKSITLRPEFTAAIVRLLVEKKLQIPIKLFSTGPAFRYERPQKGRQRQFHQINFEVFGVENPKADIELISLAHHLLTEFNISKNVRLEINSLGDSETIAKYKEVLIPYFKKFQNDLSEDSQNRLTKNPLRILDSKDEKDKLIISDAPKISDYYTRESSDFFEQILNGLTALNIPCTVNSKLVRGLDYYCHTVFEFVIEDFGAQGAVFAGGRYDNLVSSVGGKYTPAIGFAGGIERIMELINYSMKGDRPICLVPIGREAEEHALTLANELRRNGLYVIYEYNGALKNRMKKASQANAKAALIFGNEELGSKTLKIKNMDTGEEKIIAYGNIMENIHQTLLV.

The protein belongs to the class-II aminoacyl-tRNA synthetase family. Homodimer.

It is found in the cytoplasm. It catalyses the reaction tRNA(His) + L-histidine + ATP = L-histidyl-tRNA(His) + AMP + diphosphate + H(+). This Wolbachia sp. subsp. Brugia malayi (strain TRS) protein is Histidine--tRNA ligase.